The chain runs to 464 residues: Gamma-aminobutyric acid receptor subunit rho-3 (464 aa).

Positions 1–15 (MVLAFWLAFFTYTWI) are cleaved as a signal peptide. Residues 16 to 263 (TLMLDASAVK…LFINFVLRRH (248 aa)) are Extracellular-facing. R108 provides a ligand contact to 4-aminobutanoate. N123 carries N-linked (GlcNAc...) asparagine glycosylation. S172 is a 4-aminobutanoate binding site. Cysteines 181 and 195 form a disulfide. N194 carries an N-linked (GlcNAc...) asparagine glycan. E200 contacts 4-aminobutanoate. A helical membrane pass occupies residues 264–284 (IFFFVLQTYFPAMLMVMLSWV). The Cytoplasmic segment spans residues 285–296 (SFWIDRRAVPAR). The chain crosses the membrane as a helical span at residues 297–317 (VSLGITTVLTMSTIVTGVSAS). Residues 318–328 (MPQVSYVKAVD) are Extracellular-facing. A helical membrane pass occupies residues 329–349 (VYMWVSSLFVFLSVIEYAAVN). Positions 344–445 (EYAAVNYLTT…NNHVIDTYSR (102 aa)) are interaction with SQSTM1. Over 350–443 (YLTTVEEWKQ…LENNHVIDTY (94 aa)) the chain is Cytoplasmic. The helical transmembrane segment at 444–464 (SRIVFPVVYIIFNLFYWGIYV) threads the bilayer.

The protein belongs to the ligand-gated ion channel (TC 1.A.9) family. Gamma-aminobutyric acid receptor (TC 1.A.9.5) subfamily. GABRR3 sub-subfamily. Three rho subunits (rho-1/GBRR1, rho-2/GBRR2 and rho-3/GBRR3) coassemble either to form functional homopentamers or heteropentamers. Forms a ternary complex with SQSTM1 and PRKCZ. Expressed in retina.

It is found in the postsynaptic cell membrane. It localises to the cell membrane. It catalyses the reaction chloride(in) = chloride(out). Its activity is regulated as follows. Activated by agonists in the following the potency order: muscimol &gt; TACP &gt; TACA &gt; thiomuscimol &gt; CAMP &gt; CACA, when forming a homopentamer. Inhibited by TPMPA, a rho-specific antagonist, when forming a homopentamer. Inhibited antagonists in the following the potency order: TAMP = TPMPA &gt; P4MPA = THIP &gt; 14AA &gt; 3-APA, when forming a homopentamer. In terms of biological role, rho subunit of the pentameric ligand-gated chloride channels responsible for mediating the effects of gamma-aminobutyric acid (GABA), the major inhibitory neurotransmitter in the brain. Rho-containing GABA-gated chloride channels are a subclass of GABA(A) receptors (GABAARs) entirely composed of rho subunits, where GABA molecules bind at the rho intersubunit interfaces. When activated by GABA, rho-GABAARs selectively allow the flow of chloride anions across the cell membrane down their electrochemical gradient. The chain is Gamma-aminobutyric acid receptor subunit rho-3 from Rattus norvegicus (Rat).